Consider the following 84-residue polypeptide: RNA-binding protein Hfq (84 aa).

A Sm domain is found at D11–I71.

Belongs to the Hfq family. Homohexamer.

RNA chaperone that binds small regulatory RNA (sRNAs) and mRNAs to facilitate mRNA translational regulation in response to envelope stress, environmental stress and changes in metabolite concentrations. Also binds with high specificity to tRNAs. This is RNA-binding protein Hfq from Paramagnetospirillum magneticum (strain ATCC 700264 / AMB-1) (Magnetospirillum magneticum).